An 89-amino-acid polypeptide reads, in one-letter code: Small ribosomal subunit protein uS19 (89 aa).

The protein belongs to the universal ribosomal protein uS19 family.

Protein S19 forms a complex with S13 that binds strongly to the 16S ribosomal RNA. The protein is Small ribosomal subunit protein uS19 of Bacteroides fragilis (strain YCH46).